We begin with the raw amino-acid sequence, 134 residues long: UPF0216 protein AF_0460 (134 aa).

This sequence belongs to the UPF0216 family.

This chain is UPF0216 protein AF_0460, found in Archaeoglobus fulgidus (strain ATCC 49558 / DSM 4304 / JCM 9628 / NBRC 100126 / VC-16).